A 473-amino-acid chain; its full sequence is Photosystem II CP43 reaction center protein (473 aa).

A propeptide spanning residues 1–14 (MKTLYSLRRFYHVE) is cleaved from the precursor. The residue at position 15 (Thr15) is an N-acetylthreonine. Thr15 carries the phosphothreonine modification. The next 5 membrane-spanning stretches (helical) occupy residues 69–93 (LFEV…PHLA), 134–155 (LLGP…KDRN), 178–200 (KALY…RKIT), 255–275 (KPFA…LSYS), and 291–312 (WFNN…ASQA). Residue Glu367 participates in [CaMn4O5] cluster binding. Residues 447-471 (RARAAAAGFEKGIDRDFEPVLSMTP) traverse the membrane as a helical segment.

It belongs to the PsbB/PsbC family. PsbC subfamily. As to quaternary structure, PSII is composed of 1 copy each of membrane proteins PsbA, PsbB, PsbC, PsbD, PsbE, PsbF, PsbH, PsbI, PsbJ, PsbK, PsbL, PsbM, PsbT, PsbX, PsbY, PsbZ, Psb30/Ycf12, at least 3 peripheral proteins of the oxygen-evolving complex and a large number of cofactors. It forms dimeric complexes. The cofactor is Binds multiple chlorophylls and provides some of the ligands for the Ca-4Mn-5O cluster of the oxygen-evolving complex. It may also provide a ligand for a Cl- that is required for oxygen evolution. PSII binds additional chlorophylls, carotenoids and specific lipids..

Its subcellular location is the plastid. The protein localises to the chloroplast thylakoid membrane. One of the components of the core complex of photosystem II (PSII). It binds chlorophyll and helps catalyze the primary light-induced photochemical processes of PSII. PSII is a light-driven water:plastoquinone oxidoreductase, using light energy to abstract electrons from H(2)O, generating O(2) and a proton gradient subsequently used for ATP formation. The polypeptide is Photosystem II CP43 reaction center protein (Manihot esculenta (Cassava)).